The sequence spans 64 residues: Large ribosomal subunit protein bL28 (64 aa).

The protein belongs to the bacterial ribosomal protein bL28 family.

The polypeptide is Large ribosomal subunit protein bL28 (Mycoplasmoides gallisepticum (strain R(low / passage 15 / clone 2)) (Mycoplasma gallisepticum)).